A 371-amino-acid chain; its full sequence is dTDP-4-amino-4,6-dideoxy-D-glucose transaminase (371 aa).

N6-(pyridoxal phosphate)lysine is present on K186.

Belongs to the DegT/DnrJ/EryC1 family. It depends on pyridoxal 5'-phosphate as a cofactor.

The enzyme catalyses dTDP-4-amino-4,6-dideoxy-D-glucose + 2-oxoglutarate = dTDP-4-dehydro-6-deoxy-alpha-D-glucose + L-glutamate. It functions in the pathway bacterial outer membrane biogenesis; lipopolysaccharide biosynthesis. In terms of biological role, catalyzes the conversion of dTDP-4-dehydro-6-deoxy-D-glucose (dTDP-D-Glc4O) to dTDP-4-amino-4,6-dideoxy-D-glucose (dTDP-D-Qui4N). The sequence is that of dTDP-4-amino-4,6-dideoxy-D-glucose transaminase (vioA) from Escherichia coli.